The primary structure comprises 177 residues: Endoribonuclease YbeY (177 aa).

Zn(2+) is bound by residues His118, His122, and His128.

The protein belongs to the endoribonuclease YbeY family. Zn(2+) is required as a cofactor.

It localises to the cytoplasm. Its function is as follows. Single strand-specific metallo-endoribonuclease involved in late-stage 70S ribosome quality control and in maturation of the 3' terminus of the 16S rRNA. The polypeptide is Endoribonuclease YbeY (Mycobacterium bovis (strain ATCC BAA-935 / AF2122/97)).